Reading from the N-terminus, the 334-residue chain is Phosphate acyltransferase (334 aa).

This sequence belongs to the PlsX family. Homodimer. Probably interacts with PlsY.

The protein resides in the cytoplasm. It carries out the reaction a fatty acyl-[ACP] + phosphate = an acyl phosphate + holo-[ACP]. The protein operates within lipid metabolism; phospholipid metabolism. Functionally, catalyzes the reversible formation of acyl-phosphate (acyl-PO(4)) from acyl-[acyl-carrier-protein] (acyl-ACP). This enzyme utilizes acyl-ACP as fatty acyl donor, but not acyl-CoA. This chain is Phosphate acyltransferase, found in Caldicellulosiruptor saccharolyticus (strain ATCC 43494 / DSM 8903 / Tp8T 6331).